A 40-amino-acid polypeptide reads, in one-letter code: Dihydrolipoyl dehydrogenase (40 aa).

36 to 40 (EKRGT) serves as a coordination point for FAD.

The protein belongs to the class-I pyridine nucleotide-disulfide oxidoreductase family. In terms of assembly, homodimer. FAD serves as cofactor.

It localises to the mitochondrion matrix. The catalysed reaction is N(6)-[(R)-dihydrolipoyl]-L-lysyl-[protein] + NAD(+) = N(6)-[(R)-lipoyl]-L-lysyl-[protein] + NADH + H(+). In terms of biological role, lipoamide dehydrogenase is a component of the glycine cleavage system as well as of the alpha-ketoacid dehydrogenase complexes. The pyruvate dehydrogenase complex contains multiple copies of three enzymatic components: pyruvate dehydrogenase (E1), dihydrolipoamide acetyltransferase (E2) and lipoamide dehydrogenase (E3). The protein is Dihydrolipoyl dehydrogenase of Solanum tuberosum (Potato).